We begin with the raw amino-acid sequence, 567 residues long: Phosphoglucomutase-like protein 5 (567 aa).

A disordered region spans residues 1 to 26; sequence MEGSPIPVLTVPTAPYEDQRPTGGGG. Thr-120 is subject to Phosphothreonine. The residue at position 122 (Ser-122) is a Phosphoserine.

This sequence belongs to the phosphohexose mutase family. In terms of assembly, interacts with DMD/dystrophin; the interaction is direct. Interacts with UTRN/utrophin.

The protein localises to the cell junction. Its subcellular location is the adherens junction. The protein resides in the cytoplasm. It localises to the cytoskeleton. It is found in the cell membrane. The protein localises to the sarcolemma. Its function is as follows. Component of adherens-type cell-cell and cell-matrix junctions. Has no phosphoglucomutase activity in vitro. This chain is Phosphoglucomutase-like protein 5, found in Mus musculus (Mouse).